The following is a 486-amino-acid chain: Galactose-1-phosphate uridylyltransferase (486 aa).

This sequence belongs to the galactose-1-phosphate uridylyltransferase type 2 family.

Its subcellular location is the cytoplasm. The enzyme catalyses alpha-D-galactose 1-phosphate + UDP-alpha-D-glucose = alpha-D-glucose 1-phosphate + UDP-alpha-D-galactose. It functions in the pathway carbohydrate metabolism; galactose metabolism. The sequence is that of Galactose-1-phosphate uridylyltransferase from Pediococcus pentosaceus (strain ATCC 25745 / CCUG 21536 / LMG 10740 / 183-1w).